Here is a 135-residue protein sequence, read N- to C-terminus: Large ribosomal subunit protein eL32 (135 aa).

Lys9 participates in a covalent cross-link: Glycyl lysine isopeptide (Lys-Gly) (interchain with G-Cter in SUMO2). Residue Lys50 is modified to N6-succinyllysine. Ser62 is modified (phosphoserine).

This sequence belongs to the eukaryotic ribosomal protein eL32 family. As to quaternary structure, component of the large ribosomal subunit.

It is found in the cytoplasm. Component of the large ribosomal subunit. The ribosome is a large ribonucleoprotein complex responsible for the synthesis of proteins in the cell. The chain is Large ribosomal subunit protein eL32 (RPL32) from Macaca fascicularis (Crab-eating macaque).